The primary structure comprises 423 residues: Peroxisomal membrane protein PMP47A (423 aa).

Solcar repeat units follow at residues 6–120 (YDDL…TGKT), 142–230 (LSVW…LKSF), and 239–373 (ITPV…LLIL). A helical transmembrane segment spans residues 12–32 (AFAGAGGGLLSMTLTYPLVTL). Basic and acidic residues predominate over residues 43–53 (KKDQEKEKENS). The interval 43-70 (KKDQEKEKENSNEDGSLSPKSSNTSDVS) is disordered. Over residues 55 to 70 (EDGSLSPKSSNTSDVS) the composition is skewed to polar residues. 4 consecutive transmembrane segments (helical) span residues 98–118 (SALFGIAVTNFVYYYFYELTG), 148–168 (MAAGAVAGTISRVATNPIWVA), 204–224 (FTGIVPALFLVLNPIIQYTIF), and 245–265 (LLLGAFGKLIATIITYPYITL). The disordered stretch occupies residues 278–308 (SEDVEKERTDSVQSLPEDGSDEDNLKENSAK). The helical transmembrane segment at 353–373 (LLQSILNAAFLFYFKEELLIL) threads the bilayer.

This sequence belongs to the mitochondrial carrier (TC 2.A.29) family.

It is found in the peroxisome membrane. Functionally, may have transport activity. The chain is Peroxisomal membrane protein PMP47A (PMP47A) from Candida boidinii (Yeast).